Reading from the N-terminus, the 1479-residue chain is WASH complex subunit 2 (1479 aa).

Over residues 1 to 17 (MPEEQPQQQQQPVREQP) the composition is skewed to low complexity. Disordered stretches follow at residues 1–25 (MPEEQPQQQQQPVREQPSNPDDVPW), 188–210 (GGLVEGGEQAGTDAQPSANTEKK), 240–564 (FIED…GGVK), 576–1383 (FSGK…FDDI), and 1419–1479 (TSTT…NLFD). Positions 242–279 (EDSDSDSSDEEDEEDVDAEDGSDESSSESSSDDDDEKD) are enriched in acidic residues. Positions 334-349 (SKKSSNSYTSSLSDIL) are enriched in low complexity. A compositionally biased stretch (acidic residues) spans 422-431 (DDDLFGDSEE). Low complexity-rich tracts occupy residues 465–475 (TTTSSQPQQKK) and 514–532 (TPKPKSTTTSAAPTATTTK). Position 535 is a phosphothreonine (T535). The span at 542 to 552 (ASGSESTTGKS) shows a compositional bias: polar residues. The span at 595–620 (TESKASEDDFFSSDKKSTSATKKDAE) shows a compositional bias: basic and acidic residues. Residues 709–723 (PKAPTTATTTTTTKP) are compositionally biased toward low complexity. Residues 765-781 (TETKKQPITEEPKKKQD) are compositionally biased toward basic and acidic residues. Residues 802–814 (ASISPASPVSTIE) show a composition bias toward polar residues. The span at 839–885 (DLTKDEPAKSEPTKVEPTKVEPTKAEPTKVEPAKVEPTKVESDKKES) shows a compositional bias: basic and acidic residues. The span at 904 to 916 (KNPTTSSSTTATE) shows a compositional bias: polar residues. Residues 951 to 968 (SSTTKKSTTTTTTTTSSK) are compositionally biased toward low complexity. A compositionally biased stretch (basic and acidic residues) spans 981–990 (KKVEEKKSSD). Composition is skewed to low complexity over residues 991–1000 (FDSFFSGSDD) and 1010–1021 (KTTTTPPLTSTT). Residues 1062–1075 (PLTSNNTKNRTKSI) are compositionally biased toward polar residues. Residues 1091–1107 (EKNRSESPTSEKAEPTK) are compositionally biased toward basic and acidic residues. The segment covering 1108–1123 (KTSNISSLQNKLSLNP) has biased composition (polar residues). Positions 1147–1162 (STNNDNDSSATDLSDS) are enriched in low complexity. 2 stretches are compositionally biased toward polar residues: residues 1163–1174 (GRSSPSVTSPTL) and 1220–1236 (KSGTSAPNRSESPTPTQ). S1249 carries the post-translational modification Phosphoserine. The span at 1277–1292 (EKTSSGKSSPSPTIKS) shows a compositional bias: low complexity. The span at 1307–1317 (ASTTTKPTASE) shows a compositional bias: polar residues. A compositionally biased stretch (basic and acidic residues) spans 1327–1358 (KKSEPETPKETPKETPKEKEQTKEKEQPKETP). 2 stretches are compositionally biased toward low complexity: residues 1419-1445 (TSTTSKSTTTTTTTTTTKAKSTKAVDN) and 1452-1466 (NTTTKATPTKATPSK).

It belongs to the FAM21 family. As to quaternary structure, probable component of the WASH complex.

The protein is WASH complex subunit 2 of Dictyostelium discoideum (Social amoeba).